We begin with the raw amino-acid sequence, 1232 residues long: Nitrate reductase alpha subunit (1232 aa).

The 4Fe-4S Mo/W bis-MGD-type domain occupies 53 to 117; that stretch reads DKVVRSTHGV…SFSWYSYSPT (65 aa). Residues histidine 60, cysteine 64, cysteine 68, and cysteine 103 each contribute to the [4Fe-4S] cluster site. Mo-bis(molybdopterin guanine dinucleotide) is bound at residue aspartate 233.

The protein belongs to the prokaryotic molybdopterin-containing oxidoreductase family. The cofactor is [4Fe-4S] cluster. It depends on Mo-bis(molybdopterin guanine dinucleotide) as a cofactor.

It is found in the cell membrane. The catalysed reaction is nitrate + a quinol = a quinone + nitrite + H2O. Functionally, the alpha chain is the actual site of nitrate reduction. The protein is Nitrate reductase alpha subunit (narG) of Mycobacterium tuberculosis (strain CDC 1551 / Oshkosh).